Here is a 431-residue protein sequence, read N- to C-terminus: Glutamyl-tRNA reductase (431 aa).

Residues 49 to 52 (TCNR), serine 109, 114 to 116 (EGQ), and glutamine 120 contribute to the substrate site. Cysteine 50 (nucleophile) is an active-site residue. An NADP(+)-binding site is contributed by 189–194 (GAGKMA).

It belongs to the glutamyl-tRNA reductase family. In terms of assembly, homodimer.

The enzyme catalyses (S)-4-amino-5-oxopentanoate + tRNA(Glu) + NADP(+) = L-glutamyl-tRNA(Glu) + NADPH + H(+). It functions in the pathway porphyrin-containing compound metabolism; protoporphyrin-IX biosynthesis; 5-aminolevulinate from L-glutamyl-tRNA(Glu): step 1/2. The protein operates within porphyrin-containing compound metabolism; chlorophyll biosynthesis. In terms of biological role, catalyzes the NADPH-dependent reduction of glutamyl-tRNA(Glu) to glutamate 1-semialdehyde (GSA). This chain is Glutamyl-tRNA reductase, found in Synechococcus sp. (strain JA-3-3Ab) (Cyanobacteria bacterium Yellowstone A-Prime).